The sequence spans 138 residues: Large ribosomal subunit protein bL19 (138 aa).

This sequence belongs to the bacterial ribosomal protein bL19 family.

This protein is located at the 30S-50S ribosomal subunit interface and may play a role in the structure and function of the aminoacyl-tRNA binding site. This Leptospira interrogans serogroup Icterohaemorrhagiae serovar Lai (strain 56601) protein is Large ribosomal subunit protein bL19.